Here is a 343-residue protein sequence, read N- to C-terminus: tRNA N6-adenosine threonylcarbamoyltransferase (343 aa).

The Fe cation site is built by histidine 115 and histidine 119. Residues 137-141, aspartate 170, glycine 183, aspartate 187, and asparagine 276 each bind substrate; that span reads LVSGG. Residue aspartate 306 participates in Fe cation binding.

It belongs to the KAE1 / TsaD family. Fe(2+) serves as cofactor.

The protein localises to the cytoplasm. It carries out the reaction L-threonylcarbamoyladenylate + adenosine(37) in tRNA = N(6)-L-threonylcarbamoyladenosine(37) in tRNA + AMP + H(+). In terms of biological role, required for the formation of a threonylcarbamoyl group on adenosine at position 37 (t(6)A37) in tRNAs that read codons beginning with adenine. Is involved in the transfer of the threonylcarbamoyl moiety of threonylcarbamoyl-AMP (TC-AMP) to the N6 group of A37, together with TsaE and TsaB. TsaD likely plays a direct catalytic role in this reaction. The protein is tRNA N6-adenosine threonylcarbamoyltransferase of Limosilactobacillus reuteri (strain DSM 20016) (Lactobacillus reuteri).